An 879-amino-acid chain; its full sequence is Phosphoenolpyruvate carboxylase (879 aa).

Residues His138 and Lys545 contribute to the active site.

Belongs to the PEPCase type 1 family. Requires Mg(2+) as cofactor.

It carries out the reaction oxaloacetate + phosphate = phosphoenolpyruvate + hydrogencarbonate. Its function is as follows. Forms oxaloacetate, a four-carbon dicarboxylic acid source for the tricarboxylic acid cycle. The protein is Phosphoenolpyruvate carboxylase of Actinobacillus pleuropneumoniae serotype 5b (strain L20).